A 280-amino-acid polypeptide reads, in one-letter code: Cell division control protein 2 homolog B (280 aa).

Residues 1 to 5 (AYGVV) and K20 contribute to the ATP site. The region spanning 1–274 (AYGVVYKARD…AKKALEHEYF (274 aa)) is the Protein kinase domain. A Phosphotyrosine modification is found at Y2. The active-site Proton acceptor is D114. Phosphothreonine; by CAK is present on T148.

The protein belongs to the protein kinase superfamily. CMGC Ser/Thr protein kinase family. CDC2/CDKX subfamily.

The enzyme catalyses L-seryl-[protein] + ATP = O-phospho-L-seryl-[protein] + ADP + H(+). It catalyses the reaction L-threonyl-[protein] + ATP = O-phospho-L-threonyl-[protein] + ADP + H(+). It carries out the reaction [DNA-directed RNA polymerase] + ATP = phospho-[DNA-directed RNA polymerase] + ADP + H(+). With respect to regulation, phosphorylation at Tyr-2 inactivates the enzyme, while phosphorylation at Thr-148 activates it. Functionally, plays a key role in the control of the eukaryotic cell cycle. This chain is Cell division control protein 2 homolog B (CDC2B), found in Antirrhinum majus (Garden snapdragon).